We begin with the raw amino-acid sequence, 542 residues long: CTP synthase (542 aa).

The interval 1-265 is amidoligase domain; the sequence is MTKFVFVTGG…DEIVCHKLNL (265 aa). Ser-13 serves as a coordination point for CTP. Residue Ser-13 participates in UTP binding. Residues 14–19 and Asp-71 each bind ATP; that span reads SLGKGI. Mg(2+)-binding residues include Asp-71 and Glu-139. Residues 146-148, 186-191, and Lys-222 each bind CTP; these read DIE and KTKPTQ. Residues 186-191 and Lys-222 contribute to the UTP site; that span reads KTKPTQ. The Glutamine amidotransferase type-1 domain maps to 290–542; sequence NVAFVGKYVD…IAAALANRKA (253 aa). Gly-351 provides a ligand contact to L-glutamine. The active-site Nucleophile; for glutamine hydrolysis is the Cys-378. Residues 379-382, Glu-402, and Arg-468 each bind L-glutamine; that span reads LGMQ. Catalysis depends on residues His-515 and Glu-517.

This sequence belongs to the CTP synthase family. Homotetramer.

The enzyme catalyses UTP + L-glutamine + ATP + H2O = CTP + L-glutamate + ADP + phosphate + 2 H(+). The catalysed reaction is L-glutamine + H2O = L-glutamate + NH4(+). It catalyses the reaction UTP + NH4(+) + ATP = CTP + ADP + phosphate + 2 H(+). It participates in pyrimidine metabolism; CTP biosynthesis via de novo pathway; CTP from UDP: step 2/2. With respect to regulation, allosterically activated by GTP, when glutamine is the substrate; GTP has no effect on the reaction when ammonia is the substrate. The allosteric effector GTP functions by stabilizing the protein conformation that binds the tetrahedral intermediate(s) formed during glutamine hydrolysis. Inhibited by the product CTP, via allosteric rather than competitive inhibition. Its function is as follows. Catalyzes the ATP-dependent amination of UTP to CTP with either L-glutamine or ammonia as the source of nitrogen. Regulates intracellular CTP levels through interactions with the four ribonucleotide triphosphates. This Methylobacillus flagellatus (strain ATCC 51484 / DSM 6875 / VKM B-1610 / KT) protein is CTP synthase.